A 427-amino-acid chain; its full sequence is MFSKIKGTHDLMLDKMVCWQKVENHIRTLFAKYHLQEIRTPIIEYRGVFDRAAQHSEMVSKETYTFTDKKGRFITLRPEGTAGVIRSYVENKLDKTSQLHKFFYYGPFFRYERPQKGRYRQFHQVGVEILGQSSPFLDVEVIFLAYKTLKSLGICDITVKINSLGCKTTYNNYLQVFKNYLQTHYQQLCPLCQERFEKNILRIWDCKNCNNEPFLKQAPRIFDHLVEDAKVRFLQVLEGLKQMNVNFELCHDLVRGLDYYTNSVFEIVYNNEQGHQAVLGGGGCYDNLVTLFRGSPSPGIGFALGMERLMSILATRSFCNKNILPSLDAFILVSEPQFFYQGLELATTLRHQGFSADLNYKFLSFSKSLKQALKKQPLYLLILGPKEFANNQITIKNTYTQQQTTILQKDVVSYLQNNKELNYIHEN.

It belongs to the class-II aminoacyl-tRNA synthetase family. Homodimer.

It is found in the cytoplasm. The catalysed reaction is tRNA(His) + L-histidine + ATP = L-histidyl-tRNA(His) + AMP + diphosphate + H(+). In Aster yellows witches'-broom phytoplasma (strain AYWB), this protein is Histidine--tRNA ligase.